Reading from the N-terminus, the 175-residue chain is Zinc metalloproteinase-disintegrin-like catroriarin (175 aa).

One can recognise a Disintegrin domain in the interval 1–63; that stretch reads NPCCDAATCK…ECPADVFHKN (63 aa). 9 disulfides stabilise this stretch: cysteine 3–cysteine 26, cysteine 17–cysteine 23, cysteine 22–cysteine 48, cysteine 35–cysteine 55, cysteine 42–cysteine 74, cysteine 67–cysteine 79, cysteine 101–cysteine 147, cysteine 114–cysteine 124, and cysteine 131–cysteine 171. The D/ECD-tripeptide motif lies at 41 to 43; that stretch reads ECD. Residues aspartate 43, proline 44, glutamate 46, aspartate 58, and valine 59 each contribute to the Ca(2+) site.

Belongs to the venom metalloproteinase (M12B) family. P-III subfamily. P-IIIa sub-subfamily. As to quaternary structure, monomer. It depends on Zn(2+) as a cofactor. In terms of processing, glycosylated. In terms of tissue distribution, expressed by the venom gland.

The protein resides in the secreted. In terms of biological role, snake venom metalloproteinase that impairs hemostasis in the envenomed animal. This chain is Zinc metalloproteinase-disintegrin-like catroriarin, found in Crotalus atrox (Western diamondback rattlesnake).